The following is a 334-amino-acid chain: L-lactate dehydrogenase B-B chain (334 aa).

Residues 30 to 58 and R100 contribute to the NAD(+) site; that span reads GQVG…VEDK. Positions 107, 139, and 170 each coordinate substrate. N139 serves as a coordination point for NAD(+). H194 (proton acceptor) is an active-site residue. T249 is a substrate binding site.

It belongs to the LDH/MDH superfamily. LDH family. Homotetramer.

Its subcellular location is the cytoplasm. It carries out the reaction (S)-lactate + NAD(+) = pyruvate + NADH + H(+). It participates in fermentation; pyruvate fermentation to lactate; (S)-lactate from pyruvate: step 1/1. The chain is L-lactate dehydrogenase B-B chain from Danio rerio (Zebrafish).